The following is a 620-amino-acid chain: Chaperone protein HscA homolog (620 aa).

The protein belongs to the heat shock protein 70 family.

Chaperone involved in the maturation of iron-sulfur cluster-containing proteins. Has a low intrinsic ATPase activity which is markedly stimulated by HscB. The chain is Chaperone protein HscA homolog from Shewanella sp. (strain MR-4).